We begin with the raw amino-acid sequence, 277 residues long: Hydroxypyruvate/pyruvate aldolase (277 aa).

Histidine 54 functions as the Proton acceptor in the catalytic mechanism. A divalent metal cation is bound by residues glutamate 158 and aspartate 184.

This sequence belongs to the HpcH/HpaI aldolase family. The cofactor is a divalent metal cation.

The enzyme catalyses D-glyceraldehyde + 3-hydroxypyruvate = (3R,4S,5R)-3,4,5,6-tetrahydroxy-2-oxohexanoate. It catalyses the reaction D-glyceraldehyde + 3-hydroxypyruvate = 2-dehydro-D-gluconate. The catalysed reaction is D-glyceraldehyde + 3-hydroxypyruvate = 2-dehydro-D-galactonate. It carries out the reaction D-glyceraldehyde + pyruvate = 2-dehydro-3-deoxy-L-galactonate. Its function is as follows. Aldolase which can catalyze in vitro the aldolisation reaction between hydroxypyruvate (HPA) or pyruvate (PA) and D-glyceraldehyde (D-GA). The condensation of hydroxypyruvate and D-glyceraldehyde produces (3R,4S,5R)-3,4,5,6-tetrahydroxy-2-oxohexanoate as the major product, 2-dehydro-D-gluconate and 2-dehydro-D-galactonate. The condensation of pyruvate and D-glyceraldehyde produces 2-dehydro-3-deoxy-L-galactonate as the major product. The sequence is that of Hydroxypyruvate/pyruvate aldolase from Deinococcus radiodurans (strain ATCC 13939 / DSM 20539 / JCM 16871 / CCUG 27074 / LMG 4051 / NBRC 15346 / NCIMB 9279 / VKM B-1422 / R1).